Consider the following 645-residue polypeptide: L-aspartate oxidase, chloroplastic (645 aa).

The N-terminal 70 residues, 1-70 (MAALMNGFGS…RMRHKVGSIR (70 aa)), are a transit peptide targeting the chloroplast. Residues 92 to 95 (SGVA), Lys-114, 121 to 128 (NTNYAQGG), and Asp-292 contribute to the FAD site. Arg-368 acts as the Proton donor/acceptor in catalysis. FAD-binding positions include Glu-453 and 469–470 (SL).

Belongs to the FAD-dependent oxidoreductase 2 family. NadB subfamily. FAD is required as a cofactor.

It localises to the plastid. It is found in the chloroplast. It carries out the reaction L-aspartate + O2 = iminosuccinate + H2O2. It functions in the pathway cofactor biosynthesis; NAD(+) biosynthesis; iminoaspartate from L-aspartate (oxidase route): step 1/1. Catalyzes the oxidation of L-aspartate to iminoaspartate. This chain is L-aspartate oxidase, chloroplastic, found in Oryza sativa subsp. japonica (Rice).